The sequence spans 126 residues: Large ribosomal subunit protein bL20 (126 aa).

Positions 1-15 are enriched in basic residues; it reads MARVKRAVNAQKKRR. Positions 1 to 20 are disordered; the sequence is MARVKRAVNAQKKRRTTLER.

This sequence belongs to the bacterial ribosomal protein bL20 family.

In terms of biological role, binds directly to 23S ribosomal RNA and is necessary for the in vitro assembly process of the 50S ribosomal subunit. It is not involved in the protein synthesizing functions of that subunit. The polypeptide is Large ribosomal subunit protein bL20 (Beutenbergia cavernae (strain ATCC BAA-8 / DSM 12333 / CCUG 43141 / JCM 11478 / NBRC 16432 / NCIMB 13614 / HKI 0122)).